Here is a 911-residue protein sequence, read N- to C-terminus: Protein dead ringer (911 aa).

3 disordered regions span residues 1-44 (MQLR…DCDS), 67-87 (SGGG…LSHH), and 172-274 (HVTS…QNNG). A compositionally biased stretch (basic and acidic residues) spans 19–34 (IERDSDLGDDLSHGDR). At S30 the chain carries Phosphoserine. Phosphothreonine is present on T35. At S44 the chain carries Phosphoserine. The span at 174–201 (TSSPSGGNGSSYNGGTTPTNSSNSNATT) shows a compositional bias: low complexity. Residues 202–231 (NGGGTAGPGGTGGSGGGGGGGGGGGGGVGG) are compositionally biased toward gly residues. Positions 252–273 (AANSASNSSTSSEASNSSQQNN) are enriched in low complexity. Positions 293–385 (DPKRKEFLDD…YLYPYECEKK (93 aa)) constitute an ARID domain. 3 disordered regions span residues 501 to 633 (GMPP…VGSG), 662 to 775 (PSMG…GKLN), and 826 to 877 (QSET…DQDM). A compositionally biased stretch (low complexity) spans 512-550 (HQQQHSQQQQQQQHHHQQQQQQQSQQQHHLQQQRQRSQS). Positions 570–600 (HNNNSPPGSAHTSPQQREALNLSDSPPNLTN) are enriched in polar residues. Phosphoserine is present on residues S592 and S594. The span at 601–621 (IKREREREPTPEPVDQDDKFV) shows a compositional bias: basic and acidic residues. Residue S720 is modified to Phosphoserine. An REKLES domain is found at 731 to 825 (TTGGSVGHRH…GVLVANVPLS (95 aa)). Residues 737 to 751 (GHRHSSPVSTKKKGG) are compositionally biased toward basic residues. Positions 841–853 (TVEEEKDEEEEEE) are enriched in acidic residues. Over residues 854-870 (PKAAEEESHRSPVKQEN) the composition is skewed to basic and acidic residues.

In terms of tissue distribution, present in the pharyngeal muscles, hindgut epithelium, amnioserosa, ring gland, midgut-hindgut junction, posterior region of each brain lobe, longitudinal glial cells of the CNS and the salivary gland duct of germ-band retracted embryos.

The protein resides in the nucleus. Its function is as follows. Transcription factor which is a downstream target of gcm and repo. Directly or indirectly activates the transcription of locos and pros, which are essential for the development of some glial cells. Plays an essential role in defining the cell shape and migration characteristics of longitudinal glia that enable them to establish a normal axon scaffold. This chain is Protein dead ringer (retn), found in Drosophila melanogaster (Fruit fly).